A 95-amino-acid chain; its full sequence is Small integral membrane protein 18 (95 aa).

A helical transmembrane segment spans residues 35–55 (CFVILLLFIFTVVSLVVLAFL).

It is found in the membrane. The polypeptide is Small integral membrane protein 18 (SMIM18) (Homo sapiens (Human)).